The sequence spans 375 residues: MQKLQLCVYIYLFMLIVAGPVDLNENSEQKENVEKEGLCNACTWRQNTKSSRIEAIKIQILSKLRLETAPNISKDAIRQLLPKAPPLRELIDQYDVQRDDSSDGSLEDDDYHATTETIITMPTESDFLMQVDGKPKCCFFKFSSKIQYNKVVKAQLWIYLRPVETPTTVFVQILRLIKPMKDGTRYTGIRSLKLDMNPGTGIWQSIDVKTVLQNWLKQPESNLGIEIKALDENGHDLAVTFPGPGEDGLNPFLEVKVTDTPKRSRRDFGLDCDEHSTESRCCRYPLTVDFEALGWDWIIAPKRYKANYCSGECEFVFLQKYPHTHLVHQANPRGSAGPCCTPTKMSPINMLYFNGKEQIIYGKIPAMVVDRCGCS.

Positions 1 to 23 (MQKLQLCVYIYLFMLIVAGPVDL) are cleaved as a signal peptide. Positions 24-266 (NENSEQKENV…VTDTPKRSRR (243 aa)) are excised as a propeptide. An N-linked (GlcNAc...) asparagine glycan is attached at asparagine 71. 4 disulfides stabilise this stretch: cysteine 272–cysteine 282, cysteine 281–cysteine 340, cysteine 309–cysteine 372, and cysteine 313–cysteine 374.

Belongs to the TGF-beta family. Homodimer; disulfide-linked. Interacts with WFIKKN2, leading to inhibit its activity. Interacts with FSTL3. In terms of processing, synthesized as large precursor molecule that undergoes proteolytic cleavage to generate an N-terminal propeptide and a disulfide linked C-terminal dimer, which is the biologically active molecule. The circulating form consists of a latent complex of the C-terminal dimer and other proteins, including its propeptide, which maintain the C-terminal dimer in a latent, inactive state. Ligand activation requires additional cleavage of the prodomain by a tolloid-like metalloproteinase.

Its subcellular location is the secreted. In terms of biological role, acts specifically as a negative regulator of skeletal muscle growth. The sequence is that of Growth/differentiation factor 8 (MSTN) from Papio hamadryas (Hamadryas baboon).